The primary structure comprises 260 residues: Transforming acid coiled-coil-containing protein 1 (260 aa).

The segment at 1–43 (MSLNTTFTKEDGTEVVIPFNGSQNGHPENEEPEVEEAAEPSSS) is disordered. The stretch at 108 to 249 (ASSEELEKAL…CDQLLNDVDV (142 aa)) forms a coiled coil.

This sequence belongs to the TACC family. Interacts with zyg-9 to form a heterodimer. Interacts with zyg-8 to form a heterodimer. Interacts with efa-6 (via N-terminus). Expressed in touch neurons.

The protein localises to the cytoplasm. Its subcellular location is the cytoskeleton. It is found in the spindle pole. The protein resides in the microtubule organizing center. It localises to the centrosome. The protein localises to the chromosome. Its subcellular location is the centromere. It is found in the kinetochore. The protein resides in the cell projection. It localises to the axon. The protein localises to the perikaryon. Its function is as follows. Involved in microtubule formation, polymerization and assembly, regulating microtubule nucleation and length. Plays a role in pronuclear migration and mitotic and meiotic spindle elongation during early embryogenesis. In complex with zyg-9, functions during the early stages of embryonic development to regulate microtubule assembly throughout the cell cycle. Specifically, the complex is required for the formation and growth of astral microtubules and spindle microtubules during mitotic spindle assembly. At anaphase, the complex is required for mitotic spindle positioning in one-cell stage embryos. The complex acts in a partially redundant manner with the tac-1/zyg-8 complex to regulate microtubule assembly and processes during interphase, mitosis and meiosis in embryos. Plays a role in injury-induced axonal regrowth, regeneration and microtubule stability in PLM neurons and this may be downstream of efa-6. In Caenorhabditis elegans, this protein is Transforming acid coiled-coil-containing protein 1.